The primary structure comprises 371 residues: Cytochrome b (371 aa).

4 consecutive transmembrane segments (helical) span residues 25 to 45, 69 to 90, 105 to 125, and 170 to 190; these read FGSM…FLAV, WMMQ…YIHI, WMSG…GYVL, and FFAL…LHII. Residues His-75 and His-89 each coordinate heme b. 2 residues coordinate heme b: His-174 and His-188. His-193 is a binding site for a ubiquinone. 4 helical membrane passes run 218-238, 280-300, 312-332, and 339-358; these read HKDL…VSFF, LGGA…PFTH, LSQL…WAAT, and FIAI…LSIP.

Belongs to the cytochrome b family. As to quaternary structure, the cytochrome bc1 complex contains 3 respiratory subunits (MT-CYB, CYC1 and UQCRFS1), 2 core proteins (UQCRC1 and UQCRC2) and probably 6 low-molecular weight proteins. The cofactor is heme b.

Its subcellular location is the mitochondrion inner membrane. In terms of biological role, component of the ubiquinol-cytochrome c reductase complex (complex III or cytochrome b-c1 complex) that is part of the mitochondrial respiratory chain. The b-c1 complex mediates electron transfer from ubiquinol to cytochrome c. Contributes to the generation of a proton gradient across the mitochondrial membrane that is then used for ATP synthesis. In Liasis olivaceus (Olive python), this protein is Cytochrome b (MT-CYB).